A 482-amino-acid polypeptide reads, in one-letter code: ATP synthase subunit beta (482 aa).

Glycine 161–threonine 168 provides a ligand contact to ATP.

Belongs to the ATPase alpha/beta chains family. As to quaternary structure, F-type ATPases have 2 components, CF(1) - the catalytic core - and CF(0) - the membrane proton channel. CF(1) has five subunits: alpha(3), beta(3), gamma(1), delta(1), epsilon(1). CF(0) has three main subunits: a(1), b(2) and c(9-12). The alpha and beta chains form an alternating ring which encloses part of the gamma chain. CF(1) is attached to CF(0) by a central stalk formed by the gamma and epsilon chains, while a peripheral stalk is formed by the delta and b chains.

The protein localises to the cell inner membrane. It carries out the reaction ATP + H2O + 4 H(+)(in) = ADP + phosphate + 5 H(+)(out). Produces ATP from ADP in the presence of a proton gradient across the membrane. The catalytic sites are hosted primarily by the beta subunits. This is ATP synthase subunit beta from Solibacter usitatus (strain Ellin6076).